The primary structure comprises 82 residues: Progonadoliberin-3 (82 aa).

The first 23 residues, 1-23 (MDLSSKTVVQVVMLALIAQVTFS), serve as a signal peptide directing secretion. A Pyrrolidone carboxylic acid modification is found at Gln24. Gly33 is subject to Glycine amide.

This sequence belongs to the GnRH family.

The protein resides in the secreted. Its function is as follows. Stimulates the secretion of gonadotropins. In Oncorhynchus masou (Cherry salmon), this protein is Progonadoliberin-3 (gnrh3).